The primary structure comprises 1300 residues: Serine protease EspP (1300 aa).

A signal peptide spans 1–55; it reads MNKIYSLKYSHITGGLIAVSELSGRVSSRATGKKKHKRILALCFLGLLQSSYSFA. Positions 57–311 constitute a Peptidase S6 domain; sequence QMDISNFYIR…NQTTIDNLKN (255 aa). Residues histidine 127, aspartate 156, and serine 263 each act as charge relay system in the active site. In terms of domain architecture, Autotransporter spans 1034–1300; sequence DINGEAGAWA…AVNANFRYSF (267 aa).

In terms of processing, cleaved to release the mature protein from the outer membrane.

It localises to the periplasm. Its subcellular location is the secreted. The protein localises to the cell surface. The protein resides in the cell outer membrane. Its activity is regulated as follows. Inhibition of cytotoxic activity by phenylmethylsulfonyl fluoride. Serine protease capable of cleaving pepsin A and human coagulation factor V, which may contribute to the mucosal hemorrhage observed in hemorrhagic colitis. The protein is Serine protease EspP (espP) of Escherichia coli O157:H7.